We begin with the raw amino-acid sequence, 431 residues long: MSSIEPWPAPFAPTPVHATVTVPGSKSQTNRTLVLAALAAAQGQGSSTITGALRSRDTDLMIEALQTLGLRVDGTGSELTVSGRIRPGPEARVDCGLAGTVLRFVPPLAALSAAPITFDGDEQARARPIAPLLDALRGLGVPVDGAGLPFRVQGTGSVAGGTVAIDASASSQFVSGLLLSGASFTDGLTVQHTGSELPSAPHIAMTVQMLRQAGVDVDDSIPNRWLVRPGALRPRHWDVEPDLTNAVAFLAAAVVTGGTVTITGWPADSVQPAKNILDILQTLNSTVRHIDSCLQVQGPQTYRGFDVDLRDVGELTPSVAALAALASPGSVSRLAGIAHLRGHETDRLAALSTEINRLGGNCEQTSDGLVITATPLRPGSWRAYADHRMAMAGAIVGLRVAGVEVDDIGATSKTLPEFPQLWTEMVEGSSG.

3-phosphoshikimate-binding residues include Lys-26, Ser-27, and Arg-31. Lys-26 contributes to the phosphoenolpyruvate binding site. The phosphoenolpyruvate site is built by Gly-99 and Arg-127. Ser-170, Ser-171, Gln-172, Ser-199, Glu-314, and His-343 together coordinate 3-phosphoshikimate. Residue Gln-172 coordinates phosphoenolpyruvate. Glu-314 acts as the Proton acceptor in catalysis. Phosphoenolpyruvate contacts are provided by Arg-347, Arg-388, and Lys-413.

It belongs to the EPSP synthase family. Monomer.

It localises to the cytoplasm. The catalysed reaction is 3-phosphoshikimate + phosphoenolpyruvate = 5-O-(1-carboxyvinyl)-3-phosphoshikimate + phosphate. It participates in metabolic intermediate biosynthesis; chorismate biosynthesis; chorismate from D-erythrose 4-phosphate and phosphoenolpyruvate: step 6/7. Its function is as follows. Catalyzes the transfer of the enolpyruvyl moiety of phosphoenolpyruvate (PEP) to the 5-hydroxyl of shikimate-3-phosphate (S3P) to produce enolpyruvyl shikimate-3-phosphate and inorganic phosphate. The protein is 3-phosphoshikimate 1-carboxyvinyltransferase of Mycobacterium marinum (strain ATCC BAA-535 / M).